The primary structure comprises 369 residues: Putative cyclin-F1-1 (369 aa).

Residues 328–350 (AQHHLESKPAGAAGVGINSSGDD) form a disordered region.

This sequence belongs to the cyclin family. Cyclin F subfamily.

This is Putative cyclin-F1-1 (CYCF1-1) from Oryza sativa subsp. japonica (Rice).